The primary structure comprises 221 residues: Probable glutathione S-transferase (221 aa).

The GST N-terminal domain maps to 4–83 (EEVILLDFWP…YIEEVWKDKA (80 aa)). Glutathione-binding positions include serine 14, lysine 41, isoleucine 55, and 67–68 (ES). One can recognise a GST C-terminal domain in the interval 90-214 (DPYDRAQARF…PKVLEFVKVL (125 aa)).

This sequence belongs to the GST superfamily. HSP26 family. Root tip-specific expression.

It catalyses the reaction RX + glutathione = an S-substituted glutathione + a halide anion + H(+). The polypeptide is Probable glutathione S-transferase (Nicotiana tabacum (Common tobacco)).